The sequence spans 433 residues: Enolase (433 aa).

Gln166 is a binding site for (2R)-2-phosphoglycerate. Glu208 (proton donor) is an active-site residue. Positions 245, 290, and 317 each coordinate Mg(2+). Lys342, Arg371, Ser372, and Lys393 together coordinate (2R)-2-phosphoglycerate. The active-site Proton acceptor is Lys342.

This sequence belongs to the enolase family. It depends on Mg(2+) as a cofactor.

Its subcellular location is the cytoplasm. The protein resides in the secreted. The protein localises to the cell surface. The enzyme catalyses (2R)-2-phosphoglycerate = phosphoenolpyruvate + H2O. It functions in the pathway carbohydrate degradation; glycolysis; pyruvate from D-glyceraldehyde 3-phosphate: step 4/5. Catalyzes the reversible conversion of 2-phosphoglycerate (2-PG) into phosphoenolpyruvate (PEP). It is essential for the degradation of carbohydrates via glycolysis. This is Enolase from Clostridium novyi (strain NT).